Here is a 202-residue protein sequence, read N- to C-terminus: Holliday junction branch migration complex subunit RuvA (202 aa).

The interval 1–64 (MIGRLRGTLA…EDAQLLYGFA (64 aa)) is domain I. The domain II stretch occupies residues 65–143 (GKRERDFFRE…AWETSPAMFA (79 aa)). The flexible linker stretch occupies residues 144–154 (LVPNQPDGPAP). Residues 154–202 (PVNTAENDAVSALISLGYKPQEASKAISAIKEKGLSSEDMIRRALKGMI) form a domain III region.

The protein belongs to the RuvA family. Homotetramer. Forms an RuvA(8)-RuvB(12)-Holliday junction (HJ) complex. HJ DNA is sandwiched between 2 RuvA tetramers; dsDNA enters through RuvA and exits via RuvB. An RuvB hexamer assembles on each DNA strand where it exits the tetramer. Each RuvB hexamer is contacted by two RuvA subunits (via domain III) on 2 adjacent RuvB subunits; this complex drives branch migration. In the full resolvosome a probable DNA-RuvA(4)-RuvB(12)-RuvC(2) complex forms which resolves the HJ.

The protein resides in the cytoplasm. The RuvA-RuvB-RuvC complex processes Holliday junction (HJ) DNA during genetic recombination and DNA repair, while the RuvA-RuvB complex plays an important role in the rescue of blocked DNA replication forks via replication fork reversal (RFR). RuvA specifically binds to HJ cruciform DNA, conferring on it an open structure. The RuvB hexamer acts as an ATP-dependent pump, pulling dsDNA into and through the RuvAB complex. HJ branch migration allows RuvC to scan DNA until it finds its consensus sequence, where it cleaves and resolves the cruciform DNA. The protein is Holliday junction branch migration complex subunit RuvA of Pseudomonas fluorescens (strain Pf0-1).